Here is a 449-residue protein sequence, read N- to C-terminus: Glucose-6-phosphate isomerase (449 aa).

Residue Glu-291 is the Proton donor of the active site. Active-site residues include His-312 and Lys-426.

The protein belongs to the GPI family.

The protein resides in the cytoplasm. It catalyses the reaction alpha-D-glucose 6-phosphate = beta-D-fructose 6-phosphate. It functions in the pathway carbohydrate biosynthesis; gluconeogenesis. Its pathway is carbohydrate degradation; glycolysis; D-glyceraldehyde 3-phosphate and glycerone phosphate from D-glucose: step 2/4. In terms of biological role, catalyzes the reversible isomerization of glucose-6-phosphate to fructose-6-phosphate. The protein is Glucose-6-phosphate isomerase of Enterococcus faecalis (strain ATCC 700802 / V583).